The sequence spans 555 residues: CTP synthase (555 aa).

The segment at 1–271 is amidoligase domain; the sequence is MVKRGKKTKY…DDKLAELFNI (271 aa). Position 19 (Ser19) interacts with CTP. Position 19 (Ser19) interacts with UTP. ATP is bound by residues 20 to 25 and Asp77; that span reads SLGKGL. Asp77 and Glu145 together coordinate Mg(2+). CTP contacts are provided by residues 152-154, 192-197, and Lys228; these read DIE and KTKPTQ. UTP-binding positions include 192–197 and Lys228; that span reads KTKPTQ. Residues 297 to 538 form the Glutamine amidotransferase type-1 domain; that stretch reads RVGVVGKYVE…VHAAREQRDQ (242 aa). Gly358 is a binding site for L-glutamine. Cys385 serves as the catalytic Nucleophile; for glutamine hydrolysis. L-glutamine is bound by residues 386–389, Glu409, and Arg466; that span reads LGLQ. Active-site residues include His511 and Glu513.

The protein belongs to the CTP synthase family. As to quaternary structure, homotetramer.

The enzyme catalyses UTP + L-glutamine + ATP + H2O = CTP + L-glutamate + ADP + phosphate + 2 H(+). The catalysed reaction is L-glutamine + H2O = L-glutamate + NH4(+). It carries out the reaction UTP + NH4(+) + ATP = CTP + ADP + phosphate + 2 H(+). Its pathway is pyrimidine metabolism; CTP biosynthesis via de novo pathway; CTP from UDP: step 2/2. Its activity is regulated as follows. Allosterically activated by GTP, when glutamine is the substrate; GTP has no effect on the reaction when ammonia is the substrate. The allosteric effector GTP functions by stabilizing the protein conformation that binds the tetrahedral intermediate(s) formed during glutamine hydrolysis. Inhibited by the product CTP, via allosteric rather than competitive inhibition. In terms of biological role, catalyzes the ATP-dependent amination of UTP to CTP with either L-glutamine or ammonia as the source of nitrogen. Regulates intracellular CTP levels through interactions with the four ribonucleotide triphosphates. The sequence is that of CTP synthase from Anaeromyxobacter sp. (strain Fw109-5).